The primary structure comprises 130 residues: Fluoride-specific ion channel FluC (130 aa).

Helical transmembrane passes span 3-23, 38-58, 67-87, and 102-122; these read FVFL…YFVG, LGTF…GHLA, FGIF…SYGL, and ISYV…GWFL. The Na(+) site is built by glycine 77 and threonine 80.

It belongs to the fluoride channel Fluc/FEX (TC 1.A.43) family.

The protein resides in the cell inner membrane. The catalysed reaction is fluoride(in) = fluoride(out). Its activity is regulated as follows. Na(+) is not transported, but it plays an essential structural role and its presence is essential for fluoride channel function. Functionally, fluoride-specific ion channel. Important for reducing fluoride concentration in the cell, thus reducing its toxicity. This chain is Fluoride-specific ion channel FluC, found in Helicobacter pylori (strain G27).